Reading from the N-terminus, the 161-residue chain is Cyclic pyranopterin monophosphate synthase (161 aa).

Substrate contacts are provided by residues Met-76–His-78 and Met-114–Glu-115. Asp-129 is a catalytic residue.

Belongs to the MoaC family. As to quaternary structure, homohexamer; trimer of dimers.

The catalysed reaction is (8S)-3',8-cyclo-7,8-dihydroguanosine 5'-triphosphate = cyclic pyranopterin phosphate + diphosphate. It functions in the pathway cofactor biosynthesis; molybdopterin biosynthesis. Its function is as follows. Catalyzes the conversion of (8S)-3',8-cyclo-7,8-dihydroguanosine 5'-triphosphate to cyclic pyranopterin monophosphate (cPMP). The polypeptide is Cyclic pyranopterin monophosphate synthase (Clostridium acetobutylicum (strain ATCC 824 / DSM 792 / JCM 1419 / IAM 19013 / LMG 5710 / NBRC 13948 / NRRL B-527 / VKM B-1787 / 2291 / W)).